Consider the following 738-residue polypeptide: YTH domain-containing protein 1 (738 aa).

The span at 1–12 (MAADSREEKDGE) shows a compositional bias: basic and acidic residues. The segment at 1-341 (MAADSREEKD…KHEKLSSSVR (341 aa)) is disordered. The residue at position 35 (Ser35) is a Phosphoserine. Basic and acidic residues predominate over residues 50 to 59 (ERMESIDTKR). Over residues 63 to 90 (SIHSRQLISKPLSSSVSNNKRIVSTKGK) the composition is skewed to polar residues. The span at 91 to 115 (SVTEYKNEEYQRSERNKRLDADRKI) shows a compositional bias: basic and acidic residues. Lys96 participates in a covalent cross-link: Glycyl lysine isopeptide (Lys-Gly) (interchain with G-Cter in SUMO2). Ser118 and Ser120 each carry phosphoserine. Positions 124–144 (EPYKSQPEKPCLRKRDSERRA) are enriched in basic and acidic residues. Ser146 is subject to Phosphoserine. Thr148 is subject to Phosphothreonine. Composition is skewed to basic and acidic residues over residues 151 to 163 (GSERIGLEVDRRA) and 170 to 185 (SKEEGNSEEYGSDHET). A compositionally biased stretch (polar residues) spans 186-197 (GSSASSEQGNNT). Residues 198–257 (ENEEEGGEEDVEEDEEVDEDGDDDEEVDEDAEEEEDEEEDEEEEDEEEEEEEEEEYEQDE) are compositionally biased toward acidic residues. Basic and acidic residues predominate over residues 258–273 (RDQKEEGNDYDTRSEA). The span at 283–292 (FTDGSVRSGS) shows a compositional bias: polar residues. Ser311, Ser318, Ser320, Ser321, and Ser323 each carry phosphoserine. Low complexity predominate over residues 318–328 (SGSSASESYAG). A YTH domain is found at 358 to 495 (ARFFLIKSNN…ECGTQLCLLF (138 aa)). Residues 364 to 366 (KSN) and Trp380 each bind RNA. Position 427 is a phosphoserine (Ser427). Position 431 (Trp431) interacts with RNA. The residue at position 438 (Ser438) is a Phosphoserine. Asp479 is a binding site for RNA. Residues 512-526 (HKRRMHSQPRSRGRP) are compositionally biased toward basic residues. Disordered stretches follow at residues 512–566 (HKRR…RPGY), 618–654 (GMPPYPGIEQPPHHPYYQHHAPPPQAHPPYSGHHPVP), and 680–738 (AVVS…RYRR). The span at 527–566 (SRREPVRDVGRRRPEDYDIHNSRKKPRIDYPPEFHQRPGY) shows a compositional bias: basic and acidic residues. Phosphoserine is present on Ser548. Residues 690 to 738 (RERDRERERDRPRDNRRDRERDRGRDRERERERICDRDRDRGERGRYRR) are compositionally biased toward basic and acidic residues.

As to quaternary structure, interacts with SRSF1. Interacts with SRSF2. Interacts with SRSF3. Interacts with SRSF7. Interacts with SRSF10. Interacts with CPSF6. Interacts with KHDRBS1/SAM68. Interacts with TRA2B. Interacts with KHDRBS3. Interacts with EMD. Interacts with RBMX. Interacts with ZCCHC8. In terms of processing, tyrosine phosphorylated. As to expression, ubiquitous.

It localises to the nucleus. It is found in the nucleus speckle. Functionally, regulator of alternative splicing that specifically recognizes and binds N6-methyladenosine (m6A)-containing RNAs. M6A is a modification present at internal sites of mRNAs and some non-coding RNAs and plays a role in the efficiency of mRNA splicing, processing and stability. Acts as a key regulator of exon-inclusion or exon-skipping during alternative splicing via interaction with mRNA splicing factors SRSF3 and SRSF10. Specifically binds m6A-containing mRNAs and promotes recruitment of SRSF3 to its mRNA-binding elements adjacent to m6A sites, leading to exon-inclusion during alternative splicing. In contrast, interaction with SRSF3 prevents interaction with SRSF10, a splicing factor that promotes exon skipping: this prevents SRSF10 from binding to its mRNA-binding sites close to m6A-containing regions, leading to inhibit exon skipping during alternative splicing. May also regulate alternative splice site selection. Also involved in nuclear export of m6A-containing mRNAs via interaction with SRSF3: interaction with SRSF3 facilitates m6A-containing mRNA-binding to both SRSF3 and NXF1, promoting mRNA nuclear export. Involved in S-adenosyl-L-methionine homeostasis by regulating expression of MAT2A transcripts, probably by binding m6A-containing MAT2A mRNAs. Also recognizes and binds m6A on other RNA molecules. Involved in random X inactivation mediated by Xist RNA: recognizes and binds m6A-containing Xist and promotes transcription repression activity of Xist. Also recognizes and binds m6A-containing single-stranded DNA. Involved in germline development: required for spermatogonial development in males and oocyte growth and maturation in females, probably via its role in alternative splicing. In Rattus norvegicus (Rat), this protein is YTH domain-containing protein 1 (Ythdc1).